Reading from the N-terminus, the 327-residue chain is Phenylalanine--tRNA ligase alpha subunit (327 aa).

Glu-252 contacts Mg(2+).

It belongs to the class-II aminoacyl-tRNA synthetase family. Phe-tRNA synthetase alpha subunit type 1 subfamily. Tetramer of two alpha and two beta subunits. Requires Mg(2+) as cofactor.

Its subcellular location is the cytoplasm. It catalyses the reaction tRNA(Phe) + L-phenylalanine + ATP = L-phenylalanyl-tRNA(Phe) + AMP + diphosphate + H(+). The sequence is that of Phenylalanine--tRNA ligase alpha subunit from Shewanella woodyi (strain ATCC 51908 / MS32).